A 122-amino-acid polypeptide reads, in one-letter code: Large ribosomal subunit protein uL18 (122 aa).

Belongs to the universal ribosomal protein uL18 family. In terms of assembly, part of the 50S ribosomal subunit; part of the 5S rRNA/L5/L18/L25 subcomplex. Contacts the 5S and 23S rRNAs.

This is one of the proteins that bind and probably mediate the attachment of the 5S RNA into the large ribosomal subunit, where it forms part of the central protuberance. The protein is Large ribosomal subunit protein uL18 of Desulforamulus reducens (strain ATCC BAA-1160 / DSM 100696 / MI-1) (Desulfotomaculum reducens).